The chain runs to 350 residues: tRNA pseudouridine synthase D (350 aa).

Residue aspartate 85 is the Nucleophile of the active site. A TRUD domain is found at 160 to 310 (GVINYFGEQR…EAARRTILLR (151 aa)).

The protein belongs to the pseudouridine synthase TruD family.

The catalysed reaction is uridine(13) in tRNA = pseudouridine(13) in tRNA. In terms of biological role, responsible for synthesis of pseudouridine from uracil-13 in transfer RNAs. The sequence is that of tRNA pseudouridine synthase D from Idiomarina loihiensis (strain ATCC BAA-735 / DSM 15497 / L2-TR).